The sequence spans 92 residues: MNDQTPDRYVTFLGLDCDAKADRLMDMLAVRIQEDDSRWVGYFRQKLAEKERMATDNLHFVGSQINSLYSYFEELEDADALDLLWHLEHNCC.

This sequence belongs to the CowN family.

In terms of biological role, is required to sustain N(2)-dependent growth in the presence of low levels of carbon monoxide (CO). Probably acts by protecting the N(2) fixation ability of the nitrogenase complex, which is inactivated in the presence of CO. The chain is N(2)-fixation sustaining protein CowN from Cereibacter sphaeroides (strain KD131 / KCTC 12085) (Rhodobacter sphaeroides).